The following is a 330-amino-acid chain: Putative 4-hydroxythreonine-4-phosphate dehydrogenase (330 aa).

The a divalent metal cation site is built by H169, H213, and H263.

It belongs to the PdxA family. Homodimer. Zn(2+) is required as a cofactor. It depends on Mg(2+) as a cofactor. Requires Co(2+) as cofactor.

The protein resides in the cytoplasm. The catalysed reaction is 4-(phosphooxy)-L-threonine + NAD(+) = 3-amino-2-oxopropyl phosphate + CO2 + NADH. Its pathway is cofactor biosynthesis; pyridoxine 5'-phosphate biosynthesis; pyridoxine 5'-phosphate from D-erythrose 4-phosphate: step 4/5. Functionally, catalyzes the NAD(P)-dependent oxidation of 4-(phosphooxy)-L-threonine (HTP) into 2-amino-3-oxo-4-(phosphooxy)butyric acid which spontaneously decarboxylates to form 3-amino-2-oxopropyl phosphate (AHAP). The chain is Putative 4-hydroxythreonine-4-phosphate dehydrogenase from Novosphingobium aromaticivorans (Sphingomonas aromaticivorans).